We begin with the raw amino-acid sequence, 426 residues long: Pannexin-1 (426 aa).

The Cytoplasmic portion of the chain corresponds to 1–40 (MAIAQLATEYVFSDFLLKEPTEPKFKGLRLELAVDKMVTC). Position 40 is an S-nitrosocysteine (Cys40). A helical transmembrane segment spans residues 41 to 61 (IAVGLPLLLISLAFAQEISIG). At 62 to 106 (TQISCFSPSSFSWRQAAFVDSYCWAAVQQKNSLQSESGNLPLWLH) the chain is on the extracellular side. Intrachain disulfides connect Cys66/Cys265 and Cys84/Cys246. The helical transmembrane segment at 107-127 (KFFPYILLLFAILLYLPPLFW) threads the bilayer. The Cytoplasmic portion of the chain corresponds to 128 to 217 (RFAAAPHICS…NLIIKYISCR (90 aa)). At Tyr199 the chain carries Phosphotyrosine. The helical transmembrane segment at 218 to 238 (LLTLIIILLACIYLGYYFSLS) threads the bilayer. The Extracellular segment spans residues 239–266 (SLSDEFVCSIKSGILRNDSTVPDQFQCK). N-linked (GlcNAc...) asparagine glycosylation occurs at Asn255. Residues 267–287 (LIAVGIFQLLSVINLVVYVLL) traverse the membrane as a helical segment. The Cytoplasmic segment spans residues 288-426 (APVVVYTLFV…ARQRLLDSSC (139 aa)). Cys347 is subject to S-nitrosocysteine. Residues 405–414 (DSETKANNGE) show a composition bias toward polar residues. The tract at residues 405–426 (DSETKANNGEKNARQRLLDSSC) is disordered. A compositionally biased stretch (basic and acidic residues) spans 415-426 (KNARQRLLDSSC).

Belongs to the pannexin family. Homoheptameric. Post-translationally, S-nitrosylation inhibits channel currents and ATP release. In terms of processing, N-glycosylation plays a role in cell surface targeting. Glycosylation at its extracellular surface makes unlikely that two oligomers could dock to form an intercellular channel such as in gap junctions. Exists in three glycosylation states: non-glycosylated (GLY0), high-mannose glycosylated (GLY1), and fully mature glycosylated (GLY2). Cleaved by CASP3 and CASP7 during apoptosis. Cleavage opens the channel for the release of metabolites and induces plasma membrane permeability during apoptosis. Post-translationally, phosphorylated at Tyr-199 by SRC. Phosphorylation activates ATP release. Constitutively phosphorylated in vascular smooth muscle cells. As to expression, widely expressed. Highest expression is observed in oocytes and brain. Detected at very low levels in sperm cells.

The protein resides in the cell membrane. The protein localises to the endoplasmic reticulum membrane. The catalysed reaction is chloride(in) = chloride(out). It catalyses the reaction iodide(out) = iodide(in). It carries out the reaction ATP(in) = ATP(out). The enzyme catalyses K(+)(in) = K(+)(out). The catalysed reaction is Ca(2+)(in) = Ca(2+)(out). It catalyses the reaction Na(+)(in) = Na(+)(out). It carries out the reaction nitrate(in) = nitrate(out). The enzyme catalyses L-aspartate(out) = L-aspartate(in). The catalysed reaction is L-glutamate(out) = L-glutamate(in). It catalyses the reaction D-gluconate(in) = D-gluconate(out). It carries out the reaction spermidine(in) = spermidine(out). Functionally, ion channel involved in a variety of physiological functions such as blood pressure regulation, apoptotic cell clearance and oogenesis. Forms anion-selective channels with relatively low conductance and an order of permeabilities: nitrate&gt;iodide&gt;chlroride&gt;&gt;aspartate=glutamate=gluconate. Can release ATP upon activation through phosphorylation or cleavage at C-terminus. May play a role as a Ca(2+)-leak channel to regulate ER Ca(2+) homeostasis. Its function is as follows. During apoptosis, the C terminal tail is cleaved by caspases, which opens the main pore acting as a large-pore ATP efflux channel with a broad distribution, which allows the regulated release of molecules and ions smaller than 1 kDa, such as nucleotides ATP and UTP, and selective plasma membrane permeability to attract phagocytes that engulf the dying cells. In Homo sapiens (Human), this protein is Pannexin-1.